Reading from the N-terminus, the 451-residue chain is uncharacterized protein (451 aa).

The TRAM domain maps to 1 to 59; sequence MLHKNDIIETEISDISHEGMGIAKVDGFVFFVENALPGEIIKMRVLKLRKRIGYGKVEE. Residues Q283, Y312, E333, and D381 each contribute to the S-adenosyl-L-methionine site. C408 functions as the Nucleophile in the catalytic mechanism.

It belongs to the class I-like SAM-binding methyltransferase superfamily. RNA M5U methyltransferase family.

This is an uncharacterized protein from Streptococcus agalactiae serotype V (strain ATCC BAA-611 / 2603 V/R).